Consider the following 197-residue polypeptide: Phosphoheptose isomerase (197 aa).

The 162-residue stretch at 36 to 197 (MVNALLNEGK…IDSQLFGSEE (162 aa)) folds into the SIS domain. Substrate is bound at residue 51-53 (NGG). Residues His-60 and Glu-64 each coordinate Zn(2+). Residues Glu-64, 93 to 94 (ND), 119 to 121 (STS), Ser-124, and Gln-174 contribute to the substrate site. Zn(2+) is bound by residues Gln-174 and His-182.

This sequence belongs to the SIS family. GmhA subfamily. As to quaternary structure, homotetramer. It depends on Zn(2+) as a cofactor.

It is found in the cytoplasm. It carries out the reaction 2 D-sedoheptulose 7-phosphate = D-glycero-alpha-D-manno-heptose 7-phosphate + D-glycero-beta-D-manno-heptose 7-phosphate. It participates in carbohydrate biosynthesis; D-glycero-D-manno-heptose 7-phosphate biosynthesis; D-glycero-alpha-D-manno-heptose 7-phosphate and D-glycero-beta-D-manno-heptose 7-phosphate from sedoheptulose 7-phosphate: step 1/1. Its function is as follows. Catalyzes the isomerization of sedoheptulose 7-phosphate in D-glycero-D-manno-heptose 7-phosphate. The polypeptide is Phosphoheptose isomerase (Pseudomonas putida (strain GB-1)).